A 311-amino-acid polypeptide reads, in one-letter code: Methionyl-tRNA formyltransferase (311 aa).

Position 110–113 (110–113) interacts with (6S)-5,6,7,8-tetrahydrofolate; that stretch reads SLLP.

It belongs to the Fmt family.

The catalysed reaction is L-methionyl-tRNA(fMet) + (6R)-10-formyltetrahydrofolate = N-formyl-L-methionyl-tRNA(fMet) + (6S)-5,6,7,8-tetrahydrofolate + H(+). In terms of biological role, attaches a formyl group to the free amino group of methionyl-tRNA(fMet). The formyl group appears to play a dual role in the initiator identity of N-formylmethionyl-tRNA by promoting its recognition by IF2 and preventing the misappropriation of this tRNA by the elongation apparatus. The sequence is that of Methionyl-tRNA formyltransferase from Streptococcus thermophilus (strain ATCC BAA-250 / LMG 18311).